Here is a 203-residue protein sequence, read N- to C-terminus: Pyridoxine/pyridoxamine 5'-phosphate oxidase (203 aa).

FMN is bound by residues 50–55, 65–66, K71, K72, and Q94; these read RMVLLK and YT. Residue K55 coordinates substrate. Y112, R116, and S120 together coordinate substrate. FMN-binding positions include 129 to 130 and W174; that span reads QS. Residue 180-182 participates in substrate binding; it reads RLH. FMN is bound at residue R184.

The protein belongs to the pyridoxamine 5'-phosphate oxidase family. As to quaternary structure, homodimer. It depends on FMN as a cofactor.

The enzyme catalyses pyridoxamine 5'-phosphate + O2 + H2O = pyridoxal 5'-phosphate + H2O2 + NH4(+). It catalyses the reaction pyridoxine 5'-phosphate + O2 = pyridoxal 5'-phosphate + H2O2. It participates in cofactor metabolism; pyridoxal 5'-phosphate salvage; pyridoxal 5'-phosphate from pyridoxamine 5'-phosphate: step 1/1. It functions in the pathway cofactor metabolism; pyridoxal 5'-phosphate salvage; pyridoxal 5'-phosphate from pyridoxine 5'-phosphate: step 1/1. Functionally, catalyzes the oxidation of either pyridoxine 5'-phosphate (PNP) or pyridoxamine 5'-phosphate (PMP) into pyridoxal 5'-phosphate (PLP). In Brucella canis (strain ATCC 23365 / NCTC 10854 / RM-666), this protein is Pyridoxine/pyridoxamine 5'-phosphate oxidase.